The chain runs to 120 residues: Small ribosomal subunit protein uS13 (120 aa).

The disordered stretch occupies residues 94 to 120 (GLPLRGQRTRTNARTRKGPRKAIAGKK).

It belongs to the universal ribosomal protein uS13 family. Part of the 30S ribosomal subunit. Forms a loose heterodimer with protein S19. Forms two bridges to the 50S subunit in the 70S ribosome.

Located at the top of the head of the 30S subunit, it contacts several helices of the 16S rRNA. In the 70S ribosome it contacts the 23S rRNA (bridge B1a) and protein L5 of the 50S subunit (bridge B1b), connecting the 2 subunits; these bridges are implicated in subunit movement. Contacts the tRNAs in the A and P-sites. The polypeptide is Small ribosomal subunit protein uS13 (Aromatoleum aromaticum (strain DSM 19018 / LMG 30748 / EbN1) (Azoarcus sp. (strain EbN1))).